A 170-amino-acid polypeptide reads, in one-letter code: Shikimate kinase (170 aa).

15-20 (GAGKTT) contacts ATP. Thr19 provides a ligand contact to Mg(2+). Residues Asp37, Arg61, and Gly83 each coordinate substrate. Arg121 provides a ligand contact to ATP. A substrate-binding site is contributed by Arg140.

The protein belongs to the shikimate kinase family. As to quaternary structure, monomer. Requires Mg(2+) as cofactor.

It localises to the cytoplasm. The enzyme catalyses shikimate + ATP = 3-phosphoshikimate + ADP + H(+). Its pathway is metabolic intermediate biosynthesis; chorismate biosynthesis; chorismate from D-erythrose 4-phosphate and phosphoenolpyruvate: step 5/7. Its function is as follows. Catalyzes the specific phosphorylation of the 3-hydroxyl group of shikimic acid using ATP as a cosubstrate. The protein is Shikimate kinase of Neisseria gonorrhoeae (strain ATCC 700825 / FA 1090).